The chain runs to 99 residues: Large ribosomal subunit protein eL30 (99 aa).

This sequence belongs to the eukaryotic ribosomal protein eL30 family.

The protein is Large ribosomal subunit protein eL30 of Methanobrevibacter smithii (strain ATCC 35061 / DSM 861 / OCM 144 / PS).